We begin with the raw amino-acid sequence, 168 residues long: Cyanate hydratase (168 aa).

Active-site residues include R91, E94, and S117.

This sequence belongs to the cyanase family.

The catalysed reaction is cyanate + hydrogencarbonate + 3 H(+) = NH4(+) + 2 CO2. Functionally, catalyzes the reaction of cyanate with bicarbonate to produce ammonia and carbon dioxide. This chain is Cyanate hydratase, found in Arabidopsis thaliana (Mouse-ear cress).